We begin with the raw amino-acid sequence, 135 residues long: Large ribosomal subunit protein uL16c (135 aa).

It belongs to the universal ribosomal protein uL16 family. As to quaternary structure, part of the 50S ribosomal subunit.

Its subcellular location is the plastid. The protein resides in the chloroplast. The protein is Large ribosomal subunit protein uL16c of Platanus occidentalis (Sycamore).